The primary structure comprises 1470 residues: Membrane-associated guanylate kinase, WW and PDZ domain-containing protein 3 (1470 aa).

In terms of domain architecture, PDZ 1 spans Cys-18 to Gly-108. The segment at Cys-18 to Gly-108 is interaction with ADRB1 and TGFA. Residues Arg-116–Met-290 form the Guanylate kinase-like domain. Phe-123 to His-130 serves as a coordination point for ATP. The interval Thr-184 to Ser-266 is disordered. The segment covering Pro-193–Pro-204 has biased composition (pro residues). The residue at position 236 (Ser-236) is a Phosphoserine. A compositionally biased stretch (acidic residues) spans Leu-238–Lys-247. WW domains are found at residues Glu-296 to Leu-329 and Gly-342 to Glu-375. The region spanning Arg-413–Arg-495 is the PDZ 2 domain. Residues Arg-413–Arg-495 form an interaction with PTEN region. The segment at Leu-550–Ser-575 is disordered. Residues Pro-559–Ser-575 show a composition bias toward polar residues. One can recognise a PDZ 3 domain in the interval Thr-581–Arg-657. A Phosphoserine modification is found at Ser-598. A disordered region spans residues Lys-665–Ser-700. Positions Thr-676–Pro-686 are enriched in polar residues. The residue at position 702 (Ser-702) is a Phosphoserine. One can recognise a PDZ 4 domain in the interval Asp-729–Arg-811. The interaction with ADGRB1 stretch occupies residues Asp-729–Arg-811. The segment at Lys-818–Pro-847 is disordered. Positions Gln-826 to Pro-847 are enriched in polar residues. Phosphoserine is present on residues Ser-833 and Ser-916. The PDZ 5 domain maps to Asp-852 to Glu-939. Residues Asp-852–Glu-939 form an interaction with LPAR2 and GRIN2B region. Positions Glu-939–Ala-976 are disordered. Residues Ser-946–Ala-956 show a composition bias toward polar residues. Positions Pro-1022–Thr-1104 constitute a PDZ 6 domain. Disordered regions lie at residues Ile-1124–Val-1146 and Asp-1167–Leu-1470. The segment covering Thr-1175–Asn-1191 has biased composition (polar residues). Composition is skewed to basic and acidic residues over residues Ser-1193–Leu-1209 and Arg-1230–Asn-1263. Positions Ser-1285 to Gly-1304 are enriched in polar residues. Ser-1321 is modified (phosphoserine). Basic and acidic residues-rich tracts occupy residues Pro-1326–Lys-1340, Arg-1350–Glu-1361, Val-1377–Gly-1397, and Glu-1422–Ala-1431.

It belongs to the MAGUK family. In terms of assembly, interacts with ADRB1, ADGRB1, LPAR2/EDG4, FZD4, FZD7, GRIN2B, TGFA and VANGL2. Interacts with PTEN. Interacts with ADRB1, PTPRB and unidentified tyrosine phosphorylated proteins. Interacts with DLL1. Interacts with PRRG4 (via cytoplasmic domain).

The protein resides in the cell membrane. It localises to the cell junction. It is found in the tight junction. The protein localises to the nucleus. Acts as a scaffolding protein at cell-cell junctions, thereby regulating various cellular and signaling processes. Cooperates with PTEN to modulate the kinase activity of AKT1. Its interaction with PTPRB and tyrosine phosphorylated proteins suggests that it may link receptor tyrosine phosphatase with its substrates at the plasma membrane. In polarized epithelial cells, involved in efficient trafficking of TGFA to the cell surface. Regulates the ability of LPAR2 to activate ERK and RhoA pathways. Regulates the JNK signaling cascade via its interaction with FZD4 and VANGL2. The polypeptide is Membrane-associated guanylate kinase, WW and PDZ domain-containing protein 3 (Magi3) (Rattus norvegicus (Rat)).